We begin with the raw amino-acid sequence, 630 residues long: 1-deoxy-D-xylulose-5-phosphate synthase (630 aa).

Thiamine diphosphate contacts are provided by residues His-72 and Gly-113–Ser-115. Asp-144 contributes to the Mg(2+) binding site. Thiamine diphosphate is bound by residues Gly-145–Ala-146, Asn-173, Tyr-284, and Glu-367. Residue Asn-173 coordinates Mg(2+).

Belongs to the transketolase family. DXPS subfamily. In terms of assembly, homodimer. Mg(2+) is required as a cofactor. The cofactor is thiamine diphosphate.

It carries out the reaction D-glyceraldehyde 3-phosphate + pyruvate + H(+) = 1-deoxy-D-xylulose 5-phosphate + CO2. It participates in metabolic intermediate biosynthesis; 1-deoxy-D-xylulose 5-phosphate biosynthesis; 1-deoxy-D-xylulose 5-phosphate from D-glyceraldehyde 3-phosphate and pyruvate: step 1/1. Functionally, catalyzes the acyloin condensation reaction between C atoms 2 and 3 of pyruvate and glyceraldehyde 3-phosphate to yield 1-deoxy-D-xylulose-5-phosphate (DXP). This Bacillus cereus (strain G9842) protein is 1-deoxy-D-xylulose-5-phosphate synthase.